The chain runs to 287 residues: Mitochondrial dicarboxylate carrier (287 aa).

3 Solcar repeats span residues 8–88 (SRWY…VRDR), 101–188 (EKVL…AKQL), and 197–280 (DNIF…LRKN). 6 helical membrane passes run 10–30 (WYFG…LDLL), 63–82 (GLSA…FAIY), 103–123 (VLLG…ADLV), 163–182 (GATM…LSCY), 203–223 (FVAS…LDVL), and 255–275 (GLVP…VFLE).

Belongs to the mitochondrial carrier (TC 2.A.29) family. As to expression, present in high amounts in liver and kidney, and at lower levels in all the other tissues analyzed.

It localises to the mitochondrion inner membrane. The catalysed reaction is (S)-malate(in) + phosphate(out) = (S)-malate(out) + phosphate(in). It carries out the reaction malonate(out) + (S)-malate(in) = malonate(in) + (S)-malate(out). It catalyses the reaction (S)-malate(in) + succinate(out) = (S)-malate(out) + succinate(in). The enzyme catalyses (S)-malate(in) + sulfate(out) = (S)-malate(out) + sulfate(in). The catalysed reaction is malonate(out) + phosphate(in) = malonate(in) + phosphate(out). It carries out the reaction succinate(out) + phosphate(in) = succinate(in) + phosphate(out). It catalyses the reaction sulfate(out) + phosphate(in) = sulfate(in) + phosphate(out). The enzyme catalyses malonate(out) + succinate(in) = malonate(in) + succinate(out). Functionally, catalyzes the electroneutral exchange or flux of physiologically important metabolites such as dicarboxylates (malonate, malate, succinate), inorganic sulfur-containing anions, and phosphate, across mitochondrial inner membrane. Plays an important role in gluconeogenesis, fatty acid metabolism, urea synthesis, and sulfur metabolism, particularly in liver, by supplying the substrates for the different metabolic processes. Regulates fatty acid release from adipocytes, and contributes to systemic insulin sensitivity. This is Mitochondrial dicarboxylate carrier (SLC25A10) from Homo sapiens (Human).